We begin with the raw amino-acid sequence, 349 residues long: tRNA pseudouridine synthase D (349 aa).

Residue Asp77 is the Nucleophile of the active site. Residues 151–309 (GVPNYFGEQR…ETIDESTLKL (159 aa)) form the TRUD domain.

The protein belongs to the pseudouridine synthase TruD family.

The enzyme catalyses uridine(13) in tRNA = pseudouridine(13) in tRNA. Its function is as follows. Responsible for synthesis of pseudouridine from uracil-13 in transfer RNAs. In Pseudoalteromonas translucida (strain TAC 125), this protein is tRNA pseudouridine synthase D.